We begin with the raw amino-acid sequence, 301 residues long: Ribosomal RNA small subunit methyltransferase H (301 aa).

S-adenosyl-L-methionine-binding positions include 31 to 33, Asp49, Phe76, Asp97, and Gln104; that span reads GGY.

The protein belongs to the methyltransferase superfamily. RsmH family.

The protein resides in the cytoplasm. The enzyme catalyses cytidine(1402) in 16S rRNA + S-adenosyl-L-methionine = N(4)-methylcytidine(1402) in 16S rRNA + S-adenosyl-L-homocysteine + H(+). In terms of biological role, specifically methylates the N4 position of cytidine in position 1402 (C1402) of 16S rRNA. In Ehrlichia ruminantium (strain Gardel), this protein is Ribosomal RNA small subunit methyltransferase H.